An 84-amino-acid chain; its full sequence is Delta-conotoxin-like Bt6.4 (84 aa).

The signal sequence occupies residues methionine 1–alanine 22. Residues aspartate 23–arginine 57 constitute a propeptide that is removed on maturation. Disulfide bonds link cysteine 58–cysteine 74, cysteine 65–cysteine 78, and cysteine 73–cysteine 82.

The protein belongs to the conotoxin O1 superfamily. Expressed by the venom duct.

It localises to the secreted. In terms of biological role, this toxin activates voltage-gated sodium channels. It shifts the voltage-dependence of activation to more hyperpolarized potentials but has only little effect on channel inactivation. It is active on Nav1.3/SCN3A (EC(50)=3.98 nM), Nav1.4/SCN4A (EC(50)=4.99 nM), Nav1.6/SCN8A (EC(50)=1.27 nM) and Nav1.7/SCN9A (EC(50)=2.42 nM) voltage-gated sodium channels. In vivo, it induces nocifensive or pain-like behaviors in mice when injected intraplantarly. This is Delta-conotoxin-like Bt6.4 from Conus betulinus (Beech cone).